Reading from the N-terminus, the 388-residue chain is Succinate--CoA ligase [ADP-forming] subunit beta (388 aa).

An ATP-grasp domain is found at 9–244 (KQLFAEYGLP…PSQDDPREAH (236 aa)). Residues K46, 53–55 (GRG), E99, T102, and E107 each bind ATP. 2 residues coordinate Mg(2+): N199 and D213. Substrate is bound by residues N264 and 321 to 323 (GIV).

It belongs to the succinate/malate CoA ligase beta subunit family. As to quaternary structure, heterotetramer of two alpha and two beta subunits. Requires Mg(2+) as cofactor.

It carries out the reaction succinate + ATP + CoA = succinyl-CoA + ADP + phosphate. The enzyme catalyses GTP + succinate + CoA = succinyl-CoA + GDP + phosphate. It functions in the pathway carbohydrate metabolism; tricarboxylic acid cycle; succinate from succinyl-CoA (ligase route): step 1/1. Its function is as follows. Succinyl-CoA synthetase functions in the citric acid cycle (TCA), coupling the hydrolysis of succinyl-CoA to the synthesis of either ATP or GTP and thus represents the only step of substrate-level phosphorylation in the TCA. The beta subunit provides nucleotide specificity of the enzyme and binds the substrate succinate, while the binding sites for coenzyme A and phosphate are found in the alpha subunit. The protein is Succinate--CoA ligase [ADP-forming] subunit beta of Pseudomonas fluorescens (strain ATCC BAA-477 / NRRL B-23932 / Pf-5).